The sequence spans 227 residues: Ribonuclease 3 (227 aa).

One can recognise an RNase III domain in the interval 4–133 (FEKLEKLLSY…LIAAIYLDSN (130 aa)). Glu46 is a binding site for Mg(2+). Residue Asp50 is part of the active site. Mg(2+) is bound by residues Asn119 and Glu122. Glu122 is an active-site residue. The DRBM domain maps to 158-226 (DPKTALQEWA…ARSLLHRLKN (69 aa)).

Belongs to the ribonuclease III family. Homodimer. Mg(2+) is required as a cofactor.

The protein localises to the cytoplasm. The enzyme catalyses Endonucleolytic cleavage to 5'-phosphomonoester.. Its function is as follows. Digests double-stranded RNA. Involved in the processing of primary rRNA transcript to yield the immediate precursors to the large and small rRNAs (23S and 16S). Processes some mRNAs, and tRNAs when they are encoded in the rRNA operon. Processes pre-crRNA and tracrRNA of type II CRISPR loci if present in the organism. In Rickettsia conorii (strain ATCC VR-613 / Malish 7), this protein is Ribonuclease 3.